Here is a 78-residue protein sequence, read N- to C-terminus: UPF0349 protein Sca_0544 (78 aa).

This sequence belongs to the UPF0349 family.

The polypeptide is UPF0349 protein Sca_0544 (Staphylococcus carnosus (strain TM300)).